The sequence spans 204 residues: ATP phosphoribosyltransferase (204 aa).

The protein belongs to the ATP phosphoribosyltransferase family. Short subfamily.

The protein resides in the cytoplasm. The catalysed reaction is 1-(5-phospho-beta-D-ribosyl)-ATP + diphosphate = 5-phospho-alpha-D-ribose 1-diphosphate + ATP. It functions in the pathway amino-acid biosynthesis; L-histidine biosynthesis; L-histidine from 5-phospho-alpha-D-ribose 1-diphosphate: step 1/9. Catalyzes the condensation of ATP and 5-phosphoribose 1-diphosphate to form N'-(5'-phosphoribosyl)-ATP (PR-ATP). Has a crucial role in the pathway because the rate of histidine biosynthesis seems to be controlled primarily by regulation of HisG enzymatic activity. In Pyrococcus furiosus (strain ATCC 43587 / DSM 3638 / JCM 8422 / Vc1), this protein is ATP phosphoribosyltransferase (hisG).